We begin with the raw amino-acid sequence, 156 residues long: Protein US1 (156 aa).

Disordered regions lie at residues 90–114 and 133–156; these read RSRSRTAESGRSSSSSSVSVLSDGD and ARRWTQRHDSEERASQQAKNDSTS. A compositionally biased stretch (low complexity) spans 96 to 111; that stretch reads AESGRSSSSSSVSVLS. Over residues 147 to 156 the composition is skewed to polar residues; sequence SQQAKNDSTS.

This chain is Protein US1 (US1), found in Homo sapiens (Human).